Reading from the N-terminus, the 333-residue chain is Transcription factor MYB94 (333 aa).

2 consecutive HTH myb-type domains span residues 9 to 65 and 66 to 116; these read KIGV…RPGI and KRGN…KKKL. 2 consecutive DNA-binding regions (H-T-H motif) follow at residues 37-61 and 89-112; these read WRSV…TNYL and WAAI…NTHL. Residues 134 to 154 are compositionally biased toward polar residues; the sequence is KDFSISNKNTTSHQSSNSSKG. Disordered regions lie at residues 134 to 157 and 183 to 218; these read KDFS…GQWE and PTNF…YPSG. Positions 196-209 are enriched in low complexity; the sequence is SSSSSSTTTTTTTT.

In terms of tissue distribution, expressed in germinating seeds, rosette and cauline leaves, flower buds, open flowers, stems and developing siliques.

Its subcellular location is the nucleus. In terms of biological role, transcription activator involved in the activation of cuticular wax biosynthesis under drought stress. Binds directly to the promoters of genes involved in cuticular wax biosynthesis. Transactivates WSD1, KCS2/DAISY, CER1, CER2, FAR3 and ECR genes. Functions together with MYB96 in the activation of cuticular wax biosynthesis. In Arabidopsis thaliana (Mouse-ear cress), this protein is Transcription factor MYB94.